Reading from the N-terminus, the 143-residue chain is MAYNKEEKIKSLNRMQYEVTQNNGTEPPFQNEYWDHKEEGLYVDIVSGKPLFTSKDKFDSQCGWPSFTKPIEEEVEEKLDTSHGMIRTEVRSRTADSHLGHVFNDGPGPNGLRYCINSAALRFVPKHKLKEEGYESYLHLFNK.

One can recognise a MsrB domain in the interval 5 to 126; the sequence is KEEKIKSLNR…NSAALRFVPK (122 aa). Cys115 acts as the Nucleophile in catalysis.

The protein belongs to the MsrB Met sulfoxide reductase family.

It catalyses the reaction L-methionyl-[protein] + [thioredoxin]-disulfide + H2O = L-methionyl-(R)-S-oxide-[protein] + [thioredoxin]-dithiol. The protein is Peptide methionine sulfoxide reductase MsrB of Bacillus subtilis (strain 168).